The primary structure comprises 1120 residues: TBC1 domain family member 8B (1120 aa).

GRAM domains follow at residues 145-212 (LKFE…EKTS) and 285-353 (EQFN…DKTN). One can recognise a Rab-GAP TBC domain in the interval 487–674 (GIPETLRGEL…NVVDCFFYDG (188 aa)). The EF-hand domain occupies 858–893 (NKDSLALWTFRLLDENSDCLINFKEFSSAIDIMYNG). The disordered stretch occupies residues 1035-1066 (SPTSSAKGFSGTVCGSGGPSEEKTGSHLEKDP). Residues 1054 to 1066 (SEEKTGSHLEKDP) are compositionally biased toward basic and acidic residues.

Interacts (via domain Rab-GAP TBC) with RAB11B (in GTP-bound form). Kidney (at protein level).

It localises to the cytoplasm. Its subcellular location is the cytosol. Involved in vesicular recycling, probably as a RAB11B GTPase-activating protein. The chain is TBC1 domain family member 8B (TBC1D8B) from Homo sapiens (Human).